Consider the following 513-residue polypeptide: ATP synthase subunit alpha (513 aa).

169–176 contacts ATP; that stretch reads GDRQTGKT.

It belongs to the ATPase alpha/beta chains family. In terms of assembly, F-type ATPases have 2 components, CF(1) - the catalytic core - and CF(0) - the membrane proton channel. CF(1) has five subunits: alpha(3), beta(3), gamma(1), delta(1), epsilon(1). CF(0) has three main subunits: a(1), b(2) and c(9-12). The alpha and beta chains form an alternating ring which encloses part of the gamma chain. CF(1) is attached to CF(0) by a central stalk formed by the gamma and epsilon chains, while a peripheral stalk is formed by the delta and b chains.

It is found in the cell inner membrane. It carries out the reaction ATP + H2O + 4 H(+)(in) = ADP + phosphate + 5 H(+)(out). In terms of biological role, produces ATP from ADP in the presence of a proton gradient across the membrane. The alpha chain is a regulatory subunit. The chain is ATP synthase subunit alpha from Tolumonas auensis (strain DSM 9187 / NBRC 110442 / TA 4).